Here is an 809-residue protein sequence, read N- to C-terminus: Glutamine--tRNA ligase (809 aa).

Over residues 185–198 (DLIKKKTKNNEKKK) the composition is skewed to basic and acidic residues. Residues 185 to 216 (DLIKKKTKNNEKKKTNSAKKSSDNSASSGPKR) form a disordered region. The 'HIGH' region motif lies at 258-268 (PEPNGYLHIGH). ATP is bound by residues 259–261 (EPN) and 265–271 (HIGHSKA). Residue D291 participates in L-glutamine binding. S378 carries the post-translational modification Phosphoserine. Y440 is an L-glutamine binding site. ATP-binding positions include T459, 488-489 (RL), and 496-498 (LSK). The 'KMSKS' region signature appears at 495–499 (VLSKR).

This sequence belongs to the class-I aminoacyl-tRNA synthetase family.

The enzyme catalyses tRNA(Gln) + L-glutamine + ATP = L-glutaminyl-tRNA(Gln) + AMP + diphosphate. This is Glutamine--tRNA ligase (GLN4) from Saccharomyces cerevisiae (strain ATCC 204508 / S288c) (Baker's yeast).